Reading from the N-terminus, the 340-residue chain is Glyceraldehyde-3-phosphate dehydrogenase (340 aa).

NAD(+)-binding positions include 11-12 (SI) and Gly-111. 140–142 (SCN) is a binding site for D-glyceraldehyde 3-phosphate. Residue Cys-141 is the Nucleophile of the active site. Arg-169 contributes to the NAD(+) binding site. Residue 195–196 (HG) coordinates D-glyceraldehyde 3-phosphate. Gln-303 is a binding site for NAD(+).

It belongs to the glyceraldehyde-3-phosphate dehydrogenase family. As to quaternary structure, homotetramer.

The protein localises to the cytoplasm. The enzyme catalyses D-glyceraldehyde 3-phosphate + phosphate + NADP(+) = (2R)-3-phospho-glyceroyl phosphate + NADPH + H(+). The catalysed reaction is D-glyceraldehyde 3-phosphate + phosphate + NAD(+) = (2R)-3-phospho-glyceroyl phosphate + NADH + H(+). It participates in carbohydrate degradation; glycolysis; pyruvate from D-glyceraldehyde 3-phosphate: step 1/5. This Methanococcus maripaludis (strain C7 / ATCC BAA-1331) protein is Glyceraldehyde-3-phosphate dehydrogenase.